A 1130-amino-acid chain; its full sequence is 3-hydroxy-3-methylglutaryl-coenzyme A reductase 1 (1130 aa).

Residues 1 to 46 lie on the Cytoplasmic side of the membrane; sequence MATSLITRKLRSAEATNDVEPGWLKRQVTGVLQSISSHACQHPIHT. A helical transmembrane segment spans residues 47–67; the sequence is IVVIALLASTTYVGLLEGSLF. The Lumenal segment spans residues 68–242; it reads DSVRNSRNIA…DLIKHAETID (175 aa). A glycan (N-linked (GlcNAc...) asparagine) is linked at asparagine 148. Residues 242–415 form the SSD domain; sequence DIVIMTLGYL…FTFYTTILCI (174 aa). The chain crosses the membrane as a helical span at residues 243-263; it reads IVIMTLGYLSMHLSFVSLFFS. At 264-270 the chain is on the cytoplasmic side; the sequence is MRRLGSN. Residues 271-291 form a helical membrane-spanning segment; sequence FWLAATVLFSGVFAFLFGLLV. Over 292-296 the chain is Lumenal; that stretch reads TTKLG. The chain crosses the membrane as a helical span at residues 297–317; the sequence is VPINVLLLSEGLPFLVVTIGF. At 318 to 366 the chain is on the cytoplasmic side; it reads EKPIILTRAVLTAAADNRGRAGQASSSTTKSIQDSIQTAIKEQGFEIIR. A helical membrane pass occupies residues 367 to 387; it reads DYCIEIAILIAGAASGVQGGL. Residues 388–389 are Lumenal-facing; it reads RQ. Residues 390-410 traverse the membrane as a helical segment; sequence FCFLAAWILFFDCVLLFTFYT. The Cytoplasmic portion of the chain corresponds to 411–476; the sequence is TILCIKLEIN…RKLRSSSVRR (66 aa). Residues 477–497 form a helical membrane-spanning segment; it reads FKILMVGGFVLVNVVNLSTIP. Over 498–601 the chain is Lumenal; the sequence is FRDSSQGAGL…ESLLKSIEDP (104 aa). A helical membrane pass occupies residues 602–622; sequence IISKWIIAALTLSIILNGYLF. The Cytoplasmic portion of the chain corresponds to 623–1130; that stretch reads NAARWSIKEP…ARGLTMSSSE (508 aa). The Charge relay system role is filled by glutamate 792. 798 to 804 contributes to the CoA binding site; it reads STSRGAK. Residues 859–861 and 886–894 each bind NADP(+); these read SRF and DAMGMNMIS. The active-site Charge relay system is lysine 926. 955–957 provides a ligand contact to CoA; the sequence is VLK. Catalysis depends on aspartate 1002, which acts as the Charge relay system. 1097-1098 is a CoA binding site; that stretch reads AH. Catalysis depends on histidine 1098, which acts as the Proton donor. Residue 1102–1103 participates in NADP(+) binding; that stretch reads NR. The segment covering 1103-1122 has biased composition (low complexity); that stretch reads RSAATTRTSTPVSAAVSAAR. Residues 1103–1130 are disordered; it reads RSAATTRTSTPVSAAVSAARGLTMSSSE.

Belongs to the HMG-CoA reductase family.

Its subcellular location is the endoplasmic reticulum membrane. The enzyme catalyses (R)-mevalonate + 2 NADP(+) + CoA = (3S)-3-hydroxy-3-methylglutaryl-CoA + 2 NADPH + 2 H(+). It participates in metabolic intermediate biosynthesis; (R)-mevalonate biosynthesis; (R)-mevalonate from acetyl-CoA: step 3/3. HMG-CoA reductase; part of the first module of ergosterol biosynthesis pathway that includes the early steps of the pathway, conserved across all eukaryotes, and which results in the formation of mevalonate from acetyl-coenzyme A (acetyl-CoA). Hmg1 and hmg2 catalyze the reduction of hydroxymethylglutaryl-CoA (HMG-CoA) to mevalonate. The first module starts with the action of the cytosolic acetyl-CoA acetyltransferase erg10B that catalyzes the formation of acetoacetyl-CoA. The hydroxymethylglutaryl-CoA synthases erg13A and erg13B then condense acetyl-CoA with acetoacetyl-CoA to form HMG-CoA. The rate-limiting step of the early module is the reduction to mevalonate by the 3-hydroxy-3-methylglutaryl-coenzyme A (HMG-CoA) reductases hmg1 and hmg2. Mevalonate is also a precursor for the extracellular siderophore triacetylfusarinine C (TAFC). The protein is 3-hydroxy-3-methylglutaryl-coenzyme A reductase 1 of Aspergillus fumigatus (strain ATCC MYA-4609 / CBS 101355 / FGSC A1100 / Af293) (Neosartorya fumigata).